Consider the following 172-residue polypeptide: Scytalone dehydratase-like protein Arp1 (172 aa).

Tyrosine 49 is a binding site for substrate. Catalysis depends on residues histidine 84 and histidine 109. Asparagine 130 is a substrate binding site.

This sequence belongs to the scytalone dehydratase family. Homotrimer. Each subunit contains an active site, located in the central part of the hydrophobic core of the monomer, which functions independently.

Its function is as follows. Scytalone dehydratase-like protein; part of the Pks2 gene cluster that mediates the formation of infectious structures (appressoria), enabling these fungi to kill insects faster. The product of the Pks2 gene cluster is different from the one of Pks1 and has still not been identified. In Metarhizium guizhouense (strain ARSEF 977), this protein is Scytalone dehydratase-like protein Arp1.